The following is a 62-amino-acid chain: Photosystem II reaction center protein Z (62 aa).

2 helical membrane-spanning segments follow: residues 8 to 28 and 41 to 61; these read AVFA…VVFA and FSGT…NSLI.

This sequence belongs to the PsbZ family. In terms of assembly, PSII is composed of 1 copy each of membrane proteins PsbA, PsbB, PsbC, PsbD, PsbE, PsbF, PsbH, PsbI, PsbJ, PsbK, PsbL, PsbM, PsbT, PsbY, PsbZ, Psb30/Ycf12, at least 3 peripheral proteins of the oxygen-evolving complex and a large number of cofactors. It forms dimeric complexes.

The protein resides in the plastid. It is found in the chloroplast thylakoid membrane. In terms of biological role, may control the interaction of photosystem II (PSII) cores with the light-harvesting antenna, regulates electron flow through the 2 photosystem reaction centers. PSII is a light-driven water plastoquinone oxidoreductase, using light energy to abstract electrons from H(2)O, generating a proton gradient subsequently used for ATP formation. The polypeptide is Photosystem II reaction center protein Z (Spinacia oleracea (Spinach)).